Here is a 235-residue protein sequence, read N- to C-terminus: Large ribosomal subunit protein uL1 (235 aa).

It belongs to the universal ribosomal protein uL1 family. In terms of assembly, part of the 50S ribosomal subunit.

In terms of biological role, binds directly to 23S rRNA. The L1 stalk is quite mobile in the ribosome, and is involved in E site tRNA release. Protein L1 is also a translational repressor protein, it controls the translation of the L11 operon by binding to its mRNA. The protein is Large ribosomal subunit protein uL1 of Rhodospirillum centenum (strain ATCC 51521 / SW).